Here is a 290-residue protein sequence, read N- to C-terminus: Festuclavine dehydrogenase easG (290 aa).

Belongs to the fgaFS/easG family.

It catalyses the reaction festuclavine + NAD(+) = 6,8-dimethyl-6,7-didehydroergoline + NADH + H(+). It functions in the pathway alkaloid biosynthesis; ergot alkaloid biosynthesis. In terms of biological role, festuclavine dehydrogenase; part of the gene cluster that mediates the biosynthesis of fumiclavanine C, a fungal ergot alkaloid. DmaW catalyzes the first step of ergot alkaloid biosynthesis by condensing dimethylallyl diphosphate (DMAP) and tryptophan to form 4-dimethylallyl-L-tryptophan. The second step is catalyzed by the methyltransferase easF that methylates 4-dimethylallyl-L-tryptophan in the presence of S-adenosyl-L-methionine, resulting in the formation of 4-dimethylallyl-L-abrine. The catalase easC and the FAD-dependent oxidoreductase easE then transform 4-dimethylallyl-L-abrine to chanoclavine-I which is further oxidized by EasD in the presence of NAD(+), resulting in the formation of chanoclavine-I aldehyde. EasA reduces chanoclavine-I aldehyde to dihydrochanoclavine-I aldehyde that spontaneously dehydrates to form 6,8-dimethyl-6,7-didehydroergoline. EasG then catalyzes the reduction of 6,8-dimethyl-6,7-didehydroergoline to form festuclavine. Hydrolysis of festuclavine by easM then leads to the formation of fumigaclavine B which is in turn acetylated by easN to fumigaclavine A. Finally, easL catalyzes the conversion of fumigaclavine A into fumigaclavine C by attaching a dimethylallyl moiety to C-2 of the indole nucleus. This is Festuclavine dehydrogenase easG from Aspergillus fumigatus (strain ATCC MYA-4609 / CBS 101355 / FGSC A1100 / Af293) (Neosartorya fumigata).